A 72-amino-acid polypeptide reads, in one-letter code: Large ribosomal subunit protein bL31 (72 aa).

Residues C16, C18, C38, and C41 each contribute to the Zn(2+) site.

Belongs to the bacterial ribosomal protein bL31 family. Type A subfamily. Part of the 50S ribosomal subunit. Zn(2+) is required as a cofactor.

Functionally, binds the 23S rRNA. This Aliivibrio fischeri (strain ATCC 700601 / ES114) (Vibrio fischeri) protein is Large ribosomal subunit protein bL31.